The chain runs to 193 residues: Achaete-scute homolog 2 (193 aa).

2 disordered regions span residues 1–58 (MDSR…RNER) and 128–177 (PLPR…GALS). The 53-residue stretch at 50-102 (AAVARRNERERNRVKLVNLGFQALRQHVPHGGASKKLSKVETLRSAVEYIRAL) folds into the bHLH domain. Positions 128 to 152 (PLPRAPSGTPATAASPSCASSSPGR) are enriched in low complexity.

As to quaternary structure, efficient DNA binding requires dimerization with another basic helix-loop-helix (bHLH) protein. Forms heterodimers with bHLH transcription factor TCF3. May not heterodimerise with bHLH protein HAND1. In terms of tissue distribution, expressed in placenta.

It is found in the nucleus. In terms of biological role, transcription factor. Binds to E-box motifs 5'-CANNTG-3' in the regulatory elements of target genes, probably as a heterodimer with another basic helix-loop-helix (bHLH) protein such as the transcription factor TCF3. May bind both open and closed chromatin, acting as a pioneer transcription factor to allow other factors to bind and activate lineage-specific genes. Required during post-implantation development for the generation of some differentiated trophoblast cell types. Transcriptional activity of ASCL2 may be antagonised in a subset of trophoblast cells by bHLH transcription factor HAND1, perhaps by competing for dimerization with other bHLH proteins. Involved in differentiation and function of follicular T-helper (Tfh) cells, thereby playing a role in germinal center responses; probably modulates expression of genes involved in Tfh cell function, such as BCL6. May also act as a suppressor of Th1-, Th2- and Th17-cell differentiation. Induces the formation of stem cells in intestinal crypts in vitro, synergistically activating transcription of target genes, such as SOX9, together with TCF4/beta-catenin. May form a bistable transcriptional switch, controlling expression of its own gene together with Wnt/R-spondin signaling, and thereby maintaining stem cell characteristics. Modulates expression of target genes, including perhaps down-regulating EGR1/Krox24 and chemokine CXCL10/Mob-1 and up-regulating CXCR4 and CDKN1C/p57kip2, in Schwann cells. May play a role in reducing proliferation of Schwann cells, perhaps acting via modulation of expression of CDKN1C. May be dispensable for blastocyst formation and later embryonic function. May be involved in the determination of neuronal precursors. The polypeptide is Achaete-scute homolog 2 (ASCL2) (Bos taurus (Bovine)).